The following is a 332-amino-acid chain: Cinnamoyl-CoA reductase 2 (332 aa).

NADP(+) contacts are provided by residues Gly-12–Ala-18, Arg-37, Lys-43, Asp-63–Leu-64, Thr-83–Ser-85, Tyr-156, Lys-160, Pro-183–Val-186, and Ser-198. Cys-149 and Cys-157 form a disulfide bridge. Catalysis depends on Lys-160, which acts as the Proton donor.

The protein belongs to the NAD(P)-dependent epimerase/dehydratase family. Dihydroflavonol-4-reductase subfamily. In terms of tissue distribution, expressed at low levels in leaves, stems and flowers.

It catalyses the reaction (E)-cinnamaldehyde + NADP(+) + CoA = (E)-cinnamoyl-CoA + NADPH + H(+). The protein operates within aromatic compound metabolism; phenylpropanoid biosynthesis. Cinnamoyl-CoA reductase probably involved in the formation of phenolic compounds associated with the hypersensitive response. Seems not to be involved in lignin biosynthesis. The sequence is that of Cinnamoyl-CoA reductase 2 (CCR2) from Arabidopsis thaliana (Mouse-ear cress).